We begin with the raw amino-acid sequence, 413 residues long: Palmitoyl-acyl carrier protein thioesterase, chloroplastic (413 aa).

The N-terminal 57 residues, 1-57, are a transit peptide targeting the chloroplast; the sequence is MVATAVTSAFFPVTSSPDSSDSKNKKLGSIKSKPSVSSGSLQVKANAQAPPKINGTV. Residues 12–79 are disordered; the sequence is PVTSSPDSSD…DGASSPPPRT (68 aa). Residues 29-40 are compositionally biased toward low complexity; it reads SIKSKPSVSSGS. Catalysis depends on residues Asn-310, His-312, and Cys-347. Residues 394–413 are disordered; the sequence is WRPKHAKSSANMDQITAKRA.

The protein belongs to the acyl-ACP thioesterase family.

The protein resides in the plastid. It localises to the chloroplast. The catalysed reaction is hexadecanoyl-[ACP] + H2O = hexadecanoate + holo-[ACP] + H(+). Functionally, plays an essential role in chain termination during de novo fatty acid synthesis. High thioesterase activity for palmitoyl-ACP versus other acyl-ACPs. The chain is Palmitoyl-acyl carrier protein thioesterase, chloroplastic (FATB1) from Gossypium hirsutum (Upland cotton).